Here is a 503-residue protein sequence, read N- to C-terminus: Aromatase (503 aa).

Transmembrane regions (helical) follow at residues 19–39 (EVAPVASIAILLLTGFLLLVW), 51–71 (GYFLGIGPLISHCRFLWMGIG), and 303–323 (MLIAAPDTMSVSVFFMLFLIA). Substrate-binding residues include D309 and M374. A heme-binding site is contributed by C437.

Belongs to the cytochrome P450 family. Requires heme as cofactor.

It is found in the endoplasmic reticulum membrane. Its subcellular location is the microsome membrane. It carries out the reaction testosterone + 3 reduced [NADPH--hemoprotein reductase] + 3 O2 = 17beta-estradiol + formate + 3 oxidized [NADPH--hemoprotein reductase] + 4 H2O + 4 H(+). It catalyses the reaction androst-4-ene-3,17-dione + 3 reduced [NADPH--hemoprotein reductase] + 3 O2 = estrone + formate + 3 oxidized [NADPH--hemoprotein reductase] + 4 H2O + 4 H(+). The catalysed reaction is androst-4-ene-3,17-dione + reduced [NADPH--hemoprotein reductase] + O2 = 19-hydroxyandrost-4-ene-3,17-dione + oxidized [NADPH--hemoprotein reductase] + H2O + H(+). The enzyme catalyses 19-hydroxyandrost-4-ene-3,17-dione + reduced [NADPH--hemoprotein reductase] + O2 = 19-oxo-androst-4-ene-3,17-dione + oxidized [NADPH--hemoprotein reductase] + 2 H2O + H(+). It carries out the reaction 19-oxo-androst-4-ene-3,17-dione + reduced [NADPH--hemoprotein reductase] + O2 = estrone + formate + oxidized [NADPH--hemoprotein reductase] + H2O + 2 H(+). It catalyses the reaction estrone + reduced [NADPH--hemoprotein reductase] + O2 = 2-hydroxyestrone + oxidized [NADPH--hemoprotein reductase] + H2O + H(+). The catalysed reaction is 17beta-hydroxy-5alpha-androstan-3-one + reduced [NADPH--hemoprotein reductase] + O2 = 17beta,19-dihydroxy-3-oxo-5alpha-androstanone + oxidized [NADPH--hemoprotein reductase] + H2O + H(+). The enzyme catalyses 17beta,19-dihydroxy-3-oxo-5alpha-androstanone + reduced [NADPH--hemoprotein reductase] + O2 = 17beta-hydroxy-3,19-dioxo-5alpha-androstanone + oxidized [NADPH--hemoprotein reductase] + 2 H2O + H(+). It carries out the reaction 17beta-hydroxy-3,19-dioxo-5alpha-androstanone + reduced [NADPH--hemoprotein reductase] + O2 = 17beta-hydroxy-3-oxo-19-nor-5alpha-androst-1-ene + formate + oxidized [NADPH--hemoprotein reductase] + H2O + 2 H(+). It participates in steroid hormone biosynthesis. Functionally, a cytochrome P450 monooxygenase that catalyzes the conversion of C19 androgens, androst-4-ene-3,17-dione (androstenedione) and testosterone to the C18 estrogens, estrone and estradiol, respectively. Catalyzes three successive oxidations of C19 androgens: two conventional oxidations at C19 yielding 19-hydroxy and 19-oxo/19-aldehyde derivatives, followed by a third oxidative aromatization step that involves C1-beta hydrogen abstraction combined with cleavage of the C10-C19 bond to yield a phenolic A ring and formic acid. Alternatively, the third oxidative reaction yields a 19-norsteroid and formic acid. Converts dihydrotestosterone to delta1,10-dehydro 19-nordihydrotestosterone and may play a role in homeostasis of this potent androgen. Also displays 2-hydroxylase activity toward estrone. Mechanistically, uses molecular oxygen inserting one oxygen atom into a substrate, and reducing the second into a water molecule, with two electrons provided by NADPH via cytochrome P450 reductase (CPR; NADPH-ferrihemoprotein reductase). The sequence is that of Aromatase (CYP19A1) from Leucopleurus acutus (Atlantic white-sided dolphin).